Here is a 1563-residue protein sequence, read N- to C-terminus: NACHT domain- and WD repeat-containing protein 1 (1563 aa).

Residues 274 to 314 (TNHQVLEQLRELELARQELGWLYQEIRHHLWQSTESTKVFC) form a WD 1 repeat. An NACHT domain is found at 336–666 (TPLVLFGPPG…HRQLSQVIQV (331 aa)). Residue 342-349 (GPPGIGKT) participates in ATP binding. WD repeat units lie at residues 866 to 905 (GCHKGITAIAWSLEEKLLVVGTQDGAMVVWDVEEQQVVHV), 908 to 947 (GHTAEVKCVRVFAQGTLAISASKDHTLRLWSLLSGQEKVT), 954 to 994 (QNPT…LVFC), 998 to 1037 (DVSDPWVCVALLAAQGLLLALSKGGQVSLWSSAMGKLQEK), 1044 to 1082 (KEETPTCAVSIQSRARLVAGFSSGSIALVSAGEDRLLEK), 1126 to 1165 (EHEDMVETAVLGPENNLIITGSRDALIQVWSLSEQGTLLN), 1168 to 1207 (EGVGAPVSLLVRGGTLVVSASRKSSSFKVWDLKSTKKLQS), 1212 to 1251 (LDRTGLAAVSHHGSFVYFPKVGDKNKVTIWDLAEGEEQDC), 1253 to 1292 (DTSNEVRCLEVAEQAKLLFTGLVSGIVLVFPLNSRQDVLC), 1346 to 1385 (QLPETIVSVAVLADYRVVYGMSDGSLFLYDCACSKVFPLE), 1386 to 1425 (AHGSRVSCVEVSHSEQLAVSGAEDALLCLWDLQACRGMFE), and 1431 to 1470 (SCCRGVRCACFSRDDKHVFAGMEDRSVTAWSTVDGTLLAV). The disordered stretch occupies residues 1534–1563 (AAEASQDAEPVAVEGKESKSNKRSQVCLIL).

May interact with HSP90AA1, HSP90AB1 and BAG2.

The protein localises to the cytoplasm. Its subcellular location is the cytosol. In terms of biological role, may play a role in the control of androgen receptor (AR) protein steady-state levels. The chain is NACHT domain- and WD repeat-containing protein 1 (Nwd1) from Mus musculus (Mouse).